The sequence spans 140 residues: Histone H2B (140 aa).

Over residues 1-10 (MPPKAAEKKP) the composition is skewed to basic and acidic residues. The segment at 1–48 (MPPKAAEKKPSTGGKAPAGKAPAEKKEAGKKTAAAASGEKKKRGKTRK) is disordered. Lys-8 and Lys-9 each carry N6-acetyllysine; alternate. Residues Lys-8 and Lys-9 each participate in a glycyl lysine isopeptide (Lys-Gly) (interchain with G-Cter in SUMO); alternate cross-link. A compositionally biased stretch (low complexity) spans 11-21 (STGGKAPAGKA). The residue at position 15 (Lys-15) is an N6-acetyllysine. Lys-25 carries the post-translational modification N6-acetyllysine; alternate. Residue Lys-25 forms a Glycyl lysine isopeptide (Lys-Gly) (interchain with G-Cter in SUMO); alternate linkage. Lys-26 participates in a covalent cross-link: Glycyl lysine isopeptide (Lys-Gly) (interchain with G-Cter in SUMO). Lys-134 is covalently cross-linked (Glycyl lysine isopeptide (Lys-Gly) (interchain with G-Cter in ubiquitin)).

The protein belongs to the histone H2B family. As to quaternary structure, the nucleosome is a histone octamer containing two molecules each of H2A, H2B, H3 and H4 assembled in one H3-H4 heterotetramer and two H2A-H2B heterodimers. The octamer wraps approximately 147 bp of DNA. Post-translationally, monoubiquitinated by the ubc2-bre1 complex to form H2BK123ub1. H2BK123ub1 gives a specific tag for epigenetic transcriptional activation and is also prerequisite for H3K4me and H3K79me formation. H2BK123ub1 also modulates the formation of double-strand breaks during meiosis and is a prerequisite for DNA-damage checkpoint activation. Acetylated by gcn5 to form H2BK11ac and H2BK16ac. H2BK16ac can also be formed by esa1. Acetylation of N-terminal lysines and particularly formation of H2BK11acK16ac has a positive effect on transcription. In terms of processing, sumoylation to form H2BK6su or H2BK7su, and probably also H2BK16su or H2BK17su, occurs preferentially near the telomeres and represses gene transcription.

The protein localises to the nucleus. The protein resides in the chromosome. Functionally, core component of nucleosome. Nucleosomes wrap and compact DNA into chromatin, limiting DNA accessibility to the cellular machineries which require DNA as a template. Histones thereby play a central role in transcription regulation, DNA repair, DNA replication and chromosomal stability. DNA accessibility is regulated via a complex set of post-translational modifications of histones, also called histone code, and nucleosome remodeling. This is Histone H2B (htbA) from Emericella nidulans (strain FGSC A4 / ATCC 38163 / CBS 112.46 / NRRL 194 / M139) (Aspergillus nidulans).